Reading from the N-terminus, the 205-residue chain is Guanylate kinase (205 aa).

The region spanning 5–184 is the Guanylate kinase-like domain; sequence GLLIVLSGPS…AVQKIKGIVE (180 aa). Position 12–19 (12–19) interacts with ATP; sequence GPSGVGKG.

Belongs to the guanylate kinase family.

The protein localises to the cytoplasm. It catalyses the reaction GMP + ATP = GDP + ADP. Essential for recycling GMP and indirectly, cGMP. The polypeptide is Guanylate kinase (Listeria monocytogenes serotype 4b (strain F2365)).